A 699-amino-acid chain; its full sequence is Putative inactive kinesin-like protein KIN-7B (699 aa).

Positions 1-170 (MRAIQKKSLC…LLFGSCAKEV (170 aa)) constitute a Kinesin motor domain. Positions 179-247 (VMSDKALVKH…QSRLQDLLQS (69 aa)) form a coiled coil. Residues 249–345 (GDHDLNRQVQ…VNSRHSRPSG (97 aa)) form a disordered region. Residues 264-275 (RSPPSVGMPPSV) are compositionally biased toward low complexity. Over residues 276 to 298 (SRDDSSQVSHDDSDLYKEVRCIE) the composition is skewed to basic and acidic residues. Positions 313-338 (GESSSPQDSNMNSGLHGNDSNASVNS) are enriched in polar residues.

The protein belongs to the TRAFAC class myosin-kinesin ATPase superfamily. Kinesin family. KIN-7 subfamily.

The chain is Putative inactive kinesin-like protein KIN-7B from Oryza sativa subsp. japonica (Rice).